The chain runs to 353 residues: FNMESDSFEDFWKGEDLSNYSYSSALPPFLLDASPCEPESLEINKYFVVIIYALVFLLSLLGNSLVILVILYSRVGRSVTDVYLLNLALADLLFALTLPIWAASKVNGWIFGTFLCKVVSLLKEVNFYSGILLLACISVDRYLAIVHATRTLTQKRYLVKFICLSIWGLSLLLALPVLLFRRTIYPSNVSPVCYEDMGNNTANWRMLLRILPQSFGFIVPLLIMLFCYGFTLRTLFKAHMGQKHRAMRVIFAVVLIFLLCWLPYNLVLLADTLMRTQVIQETCERRNHINQALDATEILGILHSCLNPLIYAFIGQKFCHGLLKILAIHGLISKDSLPKDSRPSFVGSSSGHT.

The Extracellular portion of the chain corresponds to 1–45 (FNMESDSFEDFWKGEDLSNYSYSSALPPFLLDASPCEPESLEINK). N19 is a glycosylation site (N-linked (GlcNAc...) asparagine). Residues 46–72 (YFVVIIYALVFLLSLLGNSLVILVILY) traverse the membrane as a helical segment. The Cytoplasmic segment spans residues 73–81 (SRVGRSVTD). A helical transmembrane segment spans residues 82 to 102 (VYLLNLALADLLFALTLPIWA). Residues 103-117 (ASKVNGWIFGTFLCK) lie on the Extracellular side of the membrane. C116 and C193 are joined by a disulfide. Residues 118–139 (VVSLLKEVNFYSGILLLACISV) form a helical membrane-spanning segment. Residues 140–160 (DRYLAIVHATRTLTQKRYLVK) are Cytoplasmic-facing. Residues 161–180 (FICLSIWGLSLLLALPVLLF) traverse the membrane as a helical segment. Residues 181–205 (RRTIYPSNVSPVCYEDMGNNTANWR) are Extracellular-facing. The chain crosses the membrane as a helical span at residues 206–228 (MLLRILPQSFGFIVPLLIMLFCY). Over 229–248 (GFTLRTLFKAHMGQKHRAMR) the chain is Cytoplasmic. A helical membrane pass occupies residues 249 to 270 (VIFAVVLIFLLCWLPYNLVLLA). The Extracellular portion of the chain corresponds to 271–291 (DTLMRTQVIQETCERRNHINQ). Residues 292 to 312 (ALDATEILGILHSCLNPLIYA) traverse the membrane as a helical segment. Topologically, residues 313-353 (FIGQKFCHGLLKILAIHGLISKDSLPKDSRPSFVGSSSGHT) are cytoplasmic.

It belongs to the G-protein coupled receptor 1 family. Interacts with IL8. Interacts with GNAI2. Phosphorylated upon ligand binding; which is required for desensitization.

It is found in the cell membrane. Its function is as follows. Receptor for interleukin-8 which is a powerful neutrophil chemotactic factor. Binding of IL-8 to the receptor causes activation of neutrophils. This response is mediated via a G-protein that activates a phosphatidylinositol-calcium second messenger system. Binds to IL-8 with high affinity. Also binds with high affinity to CXCL3, GRO/MGSA and NAP-2. The chain is C-X-C chemokine receptor type 2 (CXCR2) from Gorilla gorilla gorilla (Western lowland gorilla).